Here is a 399-residue protein sequence, read N- to C-terminus: Argininosuccinate synthase (399 aa).

ATP contacts are provided by residues 10–18 (AYSGGVDTS) and Ala-38. Tyr-89 lines the L-citrulline pocket. An ATP-binding site is contributed by Gly-119. Thr-121, Asn-125, and Asp-126 together coordinate L-aspartate. Residue Asn-125 coordinates L-citrulline. 5 residues coordinate L-citrulline: Arg-129, Ser-177, Ser-186, Glu-262, and Tyr-274.

This sequence belongs to the argininosuccinate synthase family. Type 1 subfamily. In terms of assembly, homotetramer.

The protein resides in the cytoplasm. The enzyme catalyses L-citrulline + L-aspartate + ATP = 2-(N(omega)-L-arginino)succinate + AMP + diphosphate + H(+). It functions in the pathway amino-acid biosynthesis; L-arginine biosynthesis; L-arginine from L-ornithine and carbamoyl phosphate: step 2/3. This is Argininosuccinate synthase from Picosynechococcus sp. (strain ATCC 27264 / PCC 7002 / PR-6) (Agmenellum quadruplicatum).